Here is a 227-residue protein sequence, read N- to C-terminus: Phosphoribosylformylglycinamidine synthase subunit PurQ (227 aa).

The Glutamine amidotransferase type-1 domain maps to 3-225; that stretch reads FAVIVFPGSN…LKQWRETYVV (223 aa). Cysteine 86 (nucleophile) is an active-site residue. Catalysis depends on residues histidine 194 and glutamate 196.

Part of the FGAM synthase complex composed of 1 PurL, 1 PurQ and 2 PurS subunits.

Its subcellular location is the cytoplasm. The enzyme catalyses N(2)-formyl-N(1)-(5-phospho-beta-D-ribosyl)glycinamide + L-glutamine + ATP + H2O = 2-formamido-N(1)-(5-O-phospho-beta-D-ribosyl)acetamidine + L-glutamate + ADP + phosphate + H(+). It carries out the reaction L-glutamine + H2O = L-glutamate + NH4(+). It functions in the pathway purine metabolism; IMP biosynthesis via de novo pathway; 5-amino-1-(5-phospho-D-ribosyl)imidazole from N(2)-formyl-N(1)-(5-phospho-D-ribosyl)glycinamide: step 1/2. Its function is as follows. Part of the phosphoribosylformylglycinamidine synthase complex involved in the purines biosynthetic pathway. Catalyzes the ATP-dependent conversion of formylglycinamide ribonucleotide (FGAR) and glutamine to yield formylglycinamidine ribonucleotide (FGAM) and glutamate. The FGAM synthase complex is composed of three subunits. PurQ produces an ammonia molecule by converting glutamine to glutamate. PurL transfers the ammonia molecule to FGAR to form FGAM in an ATP-dependent manner. PurS interacts with PurQ and PurL and is thought to assist in the transfer of the ammonia molecule from PurQ to PurL. The protein is Phosphoribosylformylglycinamidine synthase subunit PurQ of Bacillus cereus (strain 03BB102).